The sequence spans 358 residues: Peptide chain release factor 1 (358 aa).

Gln-237 is modified (N5-methylglutamine).

It belongs to the prokaryotic/mitochondrial release factor family. In terms of processing, methylated by PrmC. Methylation increases the termination efficiency of RF1.

It is found in the cytoplasm. Functionally, peptide chain release factor 1 directs the termination of translation in response to the peptide chain termination codons UAG and UAA. This is Peptide chain release factor 1 from Streptomyces avermitilis (strain ATCC 31267 / DSM 46492 / JCM 5070 / NBRC 14893 / NCIMB 12804 / NRRL 8165 / MA-4680).